Consider the following 740-residue polypeptide: E3 ubiquitin-protein ligase TRIM9 (740 aa).

An RING-type; degenerate zinc finger spans residues 7–30 (CPTCKQLYANPVLLPCFHALCLGC). The segment covering 64 to 73 (GNGGGAGGGA) has biased composition (gly residues). A disordered region spans residues 64 to 114 (GNGGGAGGGAAAPVTNPNGPGTRHSSHSSAASTASSNTGSESVTSDQDQSD). Low complexity predominate over residues 74–105 (AAPVTNPNGPGTRHSSHSSAASTASSNTGSES). Residues 195–244 (REALRCQMCETDPKVASLICEQCEIRYCDACRELTHPARGPLAKHTLVKP) form a B box-type 1; atypical zinc finger. Cys200, Cys203, Cys225, His230, Cys255, His258, Cys277, and His283 together coordinate Zn(2+). The segment at 250-291 (QRESVCGEHEETLSQYCLSCKAPACGLCIGELRHQAHDVQSI) adopts a B box-type 2 zinc-finger fold. The stretch at 294–324 (TCKAQKTELSHNLQQLSEKARSTTEFIQRLK) forms a coiled coil. The COS domain maps to 399–459 (LKETDSAAFL…ARAIDNLNFI (61 aa)). The 94-residue stretch at 474-567 (APMTPTILPS…ELIGLQTAEV (94 aa)) folds into the Fibronectin type-III domain. The 188-residue stretch at 549–736 (NSAGEGEYSE…TMHTAMDAPK (188 aa)) folds into the B30.2/SPRY domain.

This sequence belongs to the TRIM/RBCC family. Interacts (via fibronectin type-III domain) with pico. Interacts (via SPRY domain) with netrin receptor fra.

Its subcellular location is the cell projection. It is found in the axon. The protein localises to the perikaryon. It catalyses the reaction S-ubiquitinyl-[E2 ubiquitin-conjugating enzyme]-L-cysteine + [acceptor protein]-L-lysine = [E2 ubiquitin-conjugating enzyme]-L-cysteine + N(6)-ubiquitinyl-[acceptor protein]-L-lysine.. It participates in protein modification; protein ubiquitination. In terms of biological role, E3 ubiquitin-protein ligase activity. During embryonic and larval development, regulates the pattern of axonal projections of class IV nociceptive sensory neurons (C4da) downstream of netrin receptor fra. Regulates fine-scale topography of C4da axon terminals upon neuronal activity. During eye development, consolidates the attachment of R8 photoreceptor growth cones to the target medulla layer, probably downstream of fra. In Drosophila melanogaster (Fruit fly), this protein is E3 ubiquitin-protein ligase TRIM9.